The primary structure comprises 453 residues: Ribulose bisphosphate carboxylase large chain (453 aa).

Residues 1–2 constitute a propeptide that is removed on maturation; it reads MS. Residue Pro-3 is modified to N-acetylproline. Lys-14 is subject to N6,N6,N6-trimethyllysine. Substrate is bound by residues Asn-123 and Thr-173. Lys-175 functions as the Proton acceptor in the catalytic mechanism. A substrate-binding site is contributed by Lys-177. Residues Lys-201, Asp-203, and Glu-204 each contribute to the Mg(2+) site. The residue at position 201 (Lys-201) is an N6-carboxylysine. His-294 serves as the catalytic Proton acceptor. Substrate-binding residues include Arg-295, His-327, and Ser-379.

Belongs to the RuBisCO large chain family. Type I subfamily. Heterohexadecamer of 8 large chains and 8 small chains; disulfide-linked. The disulfide link is formed within the large subunit homodimers. The cofactor is Mg(2+). The disulfide bond which can form in the large chain dimeric partners within the hexadecamer appears to be associated with oxidative stress and protein turnover.

It localises to the plastid. The protein localises to the chloroplast. It catalyses the reaction 2 (2R)-3-phosphoglycerate + 2 H(+) = D-ribulose 1,5-bisphosphate + CO2 + H2O. It carries out the reaction D-ribulose 1,5-bisphosphate + O2 = 2-phosphoglycolate + (2R)-3-phosphoglycerate + 2 H(+). RuBisCO catalyzes two reactions: the carboxylation of D-ribulose 1,5-bisphosphate, the primary event in carbon dioxide fixation, as well as the oxidative fragmentation of the pentose substrate in the photorespiration process. Both reactions occur simultaneously and in competition at the same active site. The protein is Ribulose bisphosphate carboxylase large chain of Asperula laevigata (Smooth woodruff).